Reading from the N-terminus, the 272-residue chain is Putative phosphoenolpyruvate synthase regulatory protein (272 aa).

ADP is bound at residue 151–158 (GVSRSGKT).

The protein belongs to the pyruvate, phosphate/water dikinase regulatory protein family. PSRP subfamily.

It carries out the reaction [pyruvate, water dikinase] + ADP = [pyruvate, water dikinase]-phosphate + AMP + H(+). The enzyme catalyses [pyruvate, water dikinase]-phosphate + phosphate + H(+) = [pyruvate, water dikinase] + diphosphate. Its function is as follows. Bifunctional serine/threonine kinase and phosphorylase involved in the regulation of the phosphoenolpyruvate synthase (PEPS) by catalyzing its phosphorylation/dephosphorylation. The sequence is that of Putative phosphoenolpyruvate synthase regulatory protein from Desulfotalea psychrophila (strain LSv54 / DSM 12343).